Reading from the N-terminus, the 101-residue chain is Chaperone modulatory protein CbpM (101 aa).

It belongs to the CbpM family.

Interacts with CbpA and inhibits both the DnaJ-like co-chaperone activity and the DNA binding activity of CbpA. Together with CbpA, modulates the activity of the DnaK chaperone system. Does not inhibit the co-chaperone activity of DnaJ. This Citrobacter koseri (strain ATCC BAA-895 / CDC 4225-83 / SGSC4696) protein is Chaperone modulatory protein CbpM.